We begin with the raw amino-acid sequence, 932 residues long: Glycine dehydrogenase (decarboxylating) (932 aa).

K685 carries the post-translational modification N6-(pyridoxal phosphate)lysine.

This sequence belongs to the GcvP family. The glycine cleavage system is composed of four proteins: P, T, L and H. It depends on pyridoxal 5'-phosphate as a cofactor.

The catalysed reaction is N(6)-[(R)-lipoyl]-L-lysyl-[glycine-cleavage complex H protein] + glycine + H(+) = N(6)-[(R)-S(8)-aminomethyldihydrolipoyl]-L-lysyl-[glycine-cleavage complex H protein] + CO2. The glycine cleavage system catalyzes the degradation of glycine. The P protein binds the alpha-amino group of glycine through its pyridoxal phosphate cofactor; CO(2) is released and the remaining methylamine moiety is then transferred to the lipoamide cofactor of the H protein. The sequence is that of Glycine dehydrogenase (decarboxylating) from Brucella suis (strain ATCC 23445 / NCTC 10510).